Here is a 403-residue protein sequence, read N- to C-terminus: Argininosuccinate synthase (403 aa).

Residues 12 to 20 (AYSGGLDTS) and A39 each bind ATP. Y90 and S95 together coordinate L-citrulline. G120 contributes to the ATP binding site. Residues T122, N126, and D127 each coordinate L-aspartate. N126 contributes to the L-citrulline binding site. Positions 130, 182, 191, 267, and 279 each coordinate L-citrulline.

The protein belongs to the argininosuccinate synthase family. Type 1 subfamily. Homotetramer.

It is found in the cytoplasm. It carries out the reaction L-citrulline + L-aspartate + ATP = 2-(N(omega)-L-arginino)succinate + AMP + diphosphate + H(+). It participates in amino-acid biosynthesis; L-arginine biosynthesis; L-arginine from L-ornithine and carbamoyl phosphate: step 2/3. This chain is Argininosuccinate synthase, found in Vesicomyosocius okutanii subsp. Calyptogena okutanii (strain HA).